The following is a 172-amino-acid chain: Adenine phosphoribosyltransferase (172 aa).

The protein belongs to the purine/pyrimidine phosphoribosyltransferase family. Homodimer.

The protein localises to the cytoplasm. It catalyses the reaction AMP + diphosphate = 5-phospho-alpha-D-ribose 1-diphosphate + adenine. Its pathway is purine metabolism; AMP biosynthesis via salvage pathway; AMP from adenine: step 1/1. Functionally, catalyzes a salvage reaction resulting in the formation of AMP, that is energically less costly than de novo synthesis. This chain is Adenine phosphoribosyltransferase, found in Nostoc punctiforme (strain ATCC 29133 / PCC 73102).